The chain runs to 333 residues: Holliday junction branch migration complex subunit RuvB (333 aa).

The segment at 1 to 182 (MDERLLSGES…FGVLSRLEYY (182 aa)) is large ATPase domain (RuvB-L). ATP-binding positions include Leu21, Arg22, Gly63, Lys66, Thr67, Thr68, 129–131 (EDF), Arg172, Tyr182, and Arg219. Thr67 contributes to the Mg(2+) binding site. Residues 183–253 (TVDQLSAIVE…ITQMALELLQ (71 aa)) are small ATPAse domain (RuvB-S). Positions 256-333 (KLGLDHIDHK…EHFGMEMPKV (78 aa)) are head domain (RuvB-H). Residues Arg311 and Arg316 each contribute to the DNA site.

The protein belongs to the RuvB family. As to quaternary structure, homohexamer. Forms an RuvA(8)-RuvB(12)-Holliday junction (HJ) complex. HJ DNA is sandwiched between 2 RuvA tetramers; dsDNA enters through RuvA and exits via RuvB. An RuvB hexamer assembles on each DNA strand where it exits the tetramer. Each RuvB hexamer is contacted by two RuvA subunits (via domain III) on 2 adjacent RuvB subunits; this complex drives branch migration. In the full resolvosome a probable DNA-RuvA(4)-RuvB(12)-RuvC(2) complex forms which resolves the HJ.

It localises to the cytoplasm. It carries out the reaction ATP + H2O = ADP + phosphate + H(+). In terms of biological role, the RuvA-RuvB-RuvC complex processes Holliday junction (HJ) DNA during genetic recombination and DNA repair, while the RuvA-RuvB complex plays an important role in the rescue of blocked DNA replication forks via replication fork reversal (RFR). RuvA specifically binds to HJ cruciform DNA, conferring on it an open structure. The RuvB hexamer acts as an ATP-dependent pump, pulling dsDNA into and through the RuvAB complex. RuvB forms 2 homohexamers on either side of HJ DNA bound by 1 or 2 RuvA tetramers; 4 subunits per hexamer contact DNA at a time. Coordinated motions by a converter formed by DNA-disengaged RuvB subunits stimulates ATP hydrolysis and nucleotide exchange. Immobilization of the converter enables RuvB to convert the ATP-contained energy into a lever motion, pulling 2 nucleotides of DNA out of the RuvA tetramer per ATP hydrolyzed, thus driving DNA branch migration. The RuvB motors rotate together with the DNA substrate, which together with the progressing nucleotide cycle form the mechanistic basis for DNA recombination by continuous HJ branch migration. Branch migration allows RuvC to scan DNA until it finds its consensus sequence, where it cleaves and resolves cruciform DNA. The polypeptide is Holliday junction branch migration complex subunit RuvB (Bacillus cereus (strain Q1)).